The primary structure comprises 94 residues: uncharacterized protein (94 aa).

The segment at 1-22 is disordered; sequence MATLQQAQQQNNQLTQQNNQLT. Positions 1-77 form a coiled coil; it reads MATLQQAQQQ…NRLHSENHRL (77 aa).

This is an uncharacterized protein from Acheta domesticus (House cricket).